A 254-amino-acid chain; its full sequence is Putative epimerase LsrE (254 aa).

The helical transmembrane segment at 14–34 threads the bilayer; the sequence is VALLASYPLSVGILAGQWIAL. Positions 50, 52, and 81 each coordinate a divalent metal cation. Aspartate 52 functions as the Proton acceptor in the catalytic mechanism. Residues histidine 81, 166 to 169, 199 to 201, and 221 to 222 each bind substrate; these read GYGS, DGS, and GS. Aspartate 199 contributes to the a divalent metal cation binding site. Residue aspartate 199 is the Proton donor of the active site.

The protein belongs to the ribulose-phosphate 3-epimerase family. The cofactor is a divalent metal cation.

It localises to the cell membrane. The sequence is that of Putative epimerase LsrE (lsrE) from Salmonella typhi.